The primary structure comprises 184 residues: Glucosamine 6-phosphate N-acetyltransferase (184 aa).

The N-acetyltransferase domain maps to 39–184; sequence LVLRPLCTAD…ENYMCRRFLK (146 aa). Residues Thr61, 108 to 111, and 120 to 122 contribute to the substrate site; these read KFIH and EDV. 130 to 135 lines the acetyl-CoA pocket; that stretch reads GKQLGK. Residue 151–152 participates in substrate binding; it reads YK. 165–167 serves as a coordination point for acetyl-CoA; that stretch reads YKK. The substrate site is built by Glu175 and Arg181.

It belongs to the acetyltransferase family. GNA1 subfamily. Homodimer. Ubiquitous. Shows a strong differential expression pattern in adult hematopoietic precursor cells.

It is found in the golgi apparatus membrane. Its subcellular location is the endosome membrane. The enzyme catalyses D-glucosamine 6-phosphate + acetyl-CoA = N-acetyl-D-glucosamine 6-phosphate + CoA + H(+). Its pathway is nucleotide-sugar biosynthesis; UDP-N-acetyl-alpha-D-glucosamine biosynthesis; N-acetyl-alpha-D-glucosamine 1-phosphate from alpha-D-glucosamine 6-phosphate (route I): step 1/2. In Mus musculus (Mouse), this protein is Glucosamine 6-phosphate N-acetyltransferase (Gnpnat1).